Reading from the N-terminus, the 117-residue chain is Mitochondrial import inner membrane translocase subunit Tim10B (117 aa).

The Twin CX3C motif motif lies at 22-46; it reads CFSRCVDNLSQRDLGGHEDLCVDRC. 2 disulfides stabilise this stretch: cysteine 22/cysteine 46 and cysteine 26/cysteine 42. The span at 75–97 shows a compositional bias: basic and acidic residues; it reads EMEENARKAEQQQREQEKERLKE. The interval 75–117 is disordered; it reads EMEENARKAEQQQREQEKERLKEAAATAVLTPVQPPVAGNLSM.

Belongs to the small Tim family. In terms of assembly, component of the TIM22 complex, whose core is composed of Tim22, associated with peripheral protein Tim9b/Tim10b and the 70 kDa heterohexamer. In most cases, the 70 kDa complex is composed of TIMM9 and TIMM10.

It is found in the mitochondrion inner membrane. Functionally, component of the TIM22 complex, a complex that mediates the import and insertion of multi-pass transmembrane proteins into the mitochondrial inner membrane. The TIM22 complex forms a twin-pore translocase that uses the membrane potential as the external driving force. In the TIM22 complex, it may act as a docking point for the soluble 70 kDa complex that guides the target proteins in transit through the aqueous mitochondrial intermembrane space. In Drosophila melanogaster (Fruit fly), this protein is Mitochondrial import inner membrane translocase subunit Tim10B (Tim9b).